A 1158-amino-acid chain; its full sequence is Phospholipid-transporting ATPase 1 (1158 aa).

Residues 1–15 are compositionally biased toward basic and acidic residues; that stretch reads MDPRKSIDKPPHHDP. A disordered region spans residues 1 to 30; it reads MDPRKSIDKPPHHDPILGVSSRWSVSSKDN. At 1-100 the chain is on the cytoplasmic side; sequence MDPRKSIDKP…TAKYSVFTFL (100 aa). The chain crosses the membrane as a helical span at residues 101-122; it reads PRNLFEQFHRVAYIYFLVIAVL. Residues 123–127 lie on the Extracellular side of the membrane; sequence NQLPQ. A helical membrane pass occupies residues 128–150; the sequence is LAVFGRGASIMPLAFVLLVSAIK. At 151–329 the chain is on the cytoplasmic side; sequence DAYEDFRRHR…SRLETRMNLE (179 aa). A helical transmembrane segment spans residues 330–351; the sequence is IILLSLFLIVLCTIAAATAAVW. Residues 352-391 lie on the Extracellular side of the membrane; that stretch reads LRTHRDDLDTILFYRRKDYSERPGGKNYKYYGWGWEIFFT. The helical transmembrane segment at 392–409 threads the bilayer; it reads FFMAVIVYQIMIPISLYI. Residues 410-914 lie on the Cytoplasmic side of the membrane; sequence SMELVRIGQA…HGHWNYQRMG (505 aa). Aspartate 457 functions as the 4-aspartylphosphate intermediate in the catalytic mechanism. Mg(2+) is bound by residues aspartate 859 and aspartate 863. A helical membrane pass occupies residues 915–934; the sequence is YMILYNFYRNAVFVLILFWY. At 935 to 948 the chain is on the extracellular side; the sequence is VLFTCYTLTTAITE. Residues 949–968 form a helical membrane-spanning segment; that stretch reads WSSVLYSVIYTAIPTIIIGI. Residues 969 to 998 are Cytoplasmic-facing; it reads LDKDLGRQTLLDHPQLYGVGQRAEGYSTTL. A helical membrane pass occupies residues 999–1020; the sequence is FWYTMIDTIWQSAAIFFIPMFA. The Extracellular portion of the chain corresponds to 1021-1027; sequence YWGSTID. The chain crosses the membrane as a helical span at residues 1028–1050; the sequence is TSSLGDLWTIAAVVVVNLHLAMD. Topologically, residues 1051–1056 are cytoplasmic; the sequence is VIRWNW. Residues 1057–1077 form a helical membrane-spanning segment; the sequence is ITHAAIWGSIVAACICVIVID. The Extracellular segment spans residues 1078–1090; sequence VIPTLPGYWAIFQ. Residues 1091-1115 traverse the membrane as a helical segment; the sequence is VGKTWMFWFCLLAIVVTSLLPRFAI. At 1116–1158 the chain is on the cytoplasmic side; the sequence is KFLVEYYRPSDVRIAREAEKLGTFRESQPVGVEMNLIQDPPRR.

This sequence belongs to the cation transport ATPase (P-type) (TC 3.A.3) family. Type IV subfamily. In terms of tissue distribution, expressed in roots, flowers, anthers, leaves, vascular tissues and stems.

The protein resides in the endoplasmic reticulum membrane. It is found in the cell membrane. The catalysed reaction is ATP + H2O + phospholipidSide 1 = ADP + phosphate + phospholipidSide 2.. In terms of biological role, involved in transport of phospholipids. Contributes to transmembrane flipping of lipids. Has activity with phosphatidylserine and with a much lower efficiency with phosphatidylethanolamine, but not with phosphatidylcholine. This chain is Phospholipid-transporting ATPase 1, found in Arabidopsis thaliana (Mouse-ear cress).